The chain runs to 158 residues: Small ribosomal subunit protein uS9 (158 aa).

The protein belongs to the universal ribosomal protein uS9 family.

This is Small ribosomal subunit protein uS9 from Brucella melitensis biotype 2 (strain ATCC 23457).